A 101-amino-acid polypeptide reads, in one-letter code: Small ribosomal subunit protein uS14 (101 aa).

A disordered region spans residues 1 to 21 (MAKVSLIKKNESRKKKSQSLH). Basic residues predominate over residues 11-21 (ESRKKKSQSLH).

It belongs to the universal ribosomal protein uS14 family. As to quaternary structure, part of the 30S ribosomal subunit. Contacts proteins S3 and S10.

Its function is as follows. Binds 16S rRNA, required for the assembly of 30S particles and may also be responsible for determining the conformation of the 16S rRNA at the A site. The polypeptide is Small ribosomal subunit protein uS14 (Rickettsia canadensis (strain McKiel)).